A 397-amino-acid chain; its full sequence is CCA-adding enzyme (397 aa).

ATP contacts are provided by Gly32 and Arg35. Gly32 and Arg35 together coordinate CTP. Residues Asp45 and Asp47 each contribute to the Mg(2+) site. ATP is bound by residues Arg116, Asp159, Arg162, Arg165, and Arg168. Arg116, Asp159, Arg162, Arg165, and Arg168 together coordinate CTP.

Belongs to the tRNA nucleotidyltransferase/poly(A) polymerase family. Bacterial CCA-adding enzyme type 3 subfamily. As to quaternary structure, homodimer. The cofactor is Mg(2+).

The catalysed reaction is a tRNA precursor + 2 CTP + ATP = a tRNA with a 3' CCA end + 3 diphosphate. The enzyme catalyses a tRNA with a 3' CCA end + 2 CTP + ATP = a tRNA with a 3' CCACCA end + 3 diphosphate. Its function is as follows. Catalyzes the addition and repair of the essential 3'-terminal CCA sequence in tRNAs without using a nucleic acid template. Adds these three nucleotides in the order of C, C, and A to the tRNA nucleotide-73, using CTP and ATP as substrates and producing inorganic pyrophosphate. tRNA 3'-terminal CCA addition is required both for tRNA processing and repair. Also involved in tRNA surveillance by mediating tandem CCA addition to generate a CCACCA at the 3' terminus of unstable tRNAs. While stable tRNAs receive only 3'-terminal CCA, unstable tRNAs are marked with CCACCA and rapidly degraded. The polypeptide is CCA-adding enzyme (Levilactobacillus brevis (strain ATCC 367 / BCRC 12310 / CIP 105137 / JCM 1170 / LMG 11437 / NCIMB 947 / NCTC 947) (Lactobacillus brevis)).